The following is a 257-amino-acid chain: Pyridoxine 5'-phosphate synthase (257 aa).

Position 16 (Asn-16) interacts with 3-amino-2-oxopropyl phosphate. 18–19 lines the 1-deoxy-D-xylulose 5-phosphate pocket; sequence DH. Arg-27 serves as a coordination point for 3-amino-2-oxopropyl phosphate. The active-site Proton acceptor is His-52. 1-deoxy-D-xylulose 5-phosphate contacts are provided by Arg-54 and His-59. The active-site Proton acceptor is the Glu-79. Thr-109 contacts 1-deoxy-D-xylulose 5-phosphate. His-200 acts as the Proton donor in catalysis. 3-amino-2-oxopropyl phosphate contacts are provided by residues Gly-201 and 222–223; that span reads GH.

This sequence belongs to the PNP synthase family. As to quaternary structure, homooctamer; tetramer of dimers.

It is found in the cytoplasm. It catalyses the reaction 3-amino-2-oxopropyl phosphate + 1-deoxy-D-xylulose 5-phosphate = pyridoxine 5'-phosphate + phosphate + 2 H2O + H(+). Its pathway is cofactor biosynthesis; pyridoxine 5'-phosphate biosynthesis; pyridoxine 5'-phosphate from D-erythrose 4-phosphate: step 5/5. Its function is as follows. Catalyzes the complicated ring closure reaction between the two acyclic compounds 1-deoxy-D-xylulose-5-phosphate (DXP) and 3-amino-2-oxopropyl phosphate (1-amino-acetone-3-phosphate or AAP) to form pyridoxine 5'-phosphate (PNP) and inorganic phosphate. This is Pyridoxine 5'-phosphate synthase from Burkholderia pseudomallei (strain 1710b).